A 121-amino-acid polypeptide reads, in one-letter code: CRISPR system Cms protein Csm2 (121 aa).

The protein belongs to the CRISPR-associated Csm2 family. Part of the Csm effector complex that includes at least Cas10(1), Csm2(3), Csm3(5), Csm4(1), Csm5(1) and mature crRNA. The Csm complex is elongated and slightly twisted with a maximal length of 215 Angstroms and a diameter of 75-80 Angstroms. It has been modeled to have a central protein filamant of Csm3 subunits along which the dsRNA helix of paired crRNA and target RNA binds. The filament is capped at one end by Cas10 and Csm4 and at the other end by Csm5; ssDNA is thought to bind to the N-terminal HD domain of Cas10. Csm with a precursor crRNA does not include Csm5, while Cas6, the enzyme probably involved in pre-crRNA processing, is found associated with a subset of the Csm complex.

Functionally, CRISPR (clustered regularly interspaced short palindromic repeat) is an adaptive immune system that provides protection against mobile genetic elements (viruses, transposable elements and conjugative plasmids). CRISPR clusters contain spacers, sequences complementary to antecedent mobile elements, and target invading nucleic acids. CRISPR clusters are transcribed and processed into CRISPR RNA (crRNA). The type III-A Csm effector complex binds crRNA and acts as a crRNA-guided RNase, DNase and cyclic oligoadenylate synthase; binding of target RNA cognate to the crRNA is required for all activities. In a heterologous host this Csm effector complex restricts ssRNA phage MS2, suggesting it may target RNA viruses in vivo. Its function is as follows. Csm functions as a non-specific ssDNase. Base-pairing between crRNA and target RNA to form a ternary Csm complex activates a ssDNase activity; target RNA cleavage suppresses the ssDNase, a temporal control that prevents uncontrolled DNA degradation. Viral RNA transcripts probably tether the Csm complex to the viral genome, recruiting Cas10 ssDNA activity which is able to degrade DNA in the transcription bubble, spatially controlling the DNase activity. This subunit may be involved in monitoring complementarity of crRNA and target RNA. This chain is CRISPR system Cms protein Csm2, found in Streptococcus thermophilus.